Consider the following 117-residue polypeptide: UPF0342 protein lwe2240 (117 aa).

Belongs to the UPF0342 family.

In Listeria welshimeri serovar 6b (strain ATCC 35897 / DSM 20650 / CCUG 15529 / CIP 8149 / NCTC 11857 / SLCC 5334 / V8), this protein is UPF0342 protein lwe2240.